Here is a 129-residue protein sequence, read N- to C-terminus: uncharacterized protein (129 aa).

Over residues 86–96 (NDGFSSDDEPE) the composition is skewed to acidic residues. The tract at residues 86-129 (NDGFSSDDEPEEHVILTEDNQGEPSETPQATFDITEFIKTEDED) is disordered. Residues 103–117 (EDNQGEPSETPQATF) are compositionally biased toward polar residues.

The protein belongs to the asfivirus D129L family.

This is an uncharacterized protein from African swine fever virus (isolate Tick/South Africa/Pretoriuskop Pr4/1996) (ASFV).